Reading from the N-terminus, the 158-residue chain is Large ribosomal subunit protein uL16 (158 aa).

Belongs to the universal ribosomal protein uL16 family. In terms of assembly, part of the 50S ribosomal subunit.

Its function is as follows. Binds 23S rRNA and is also seen to make contacts with the A and possibly P site tRNAs. This Parasynechococcus marenigrum (strain WH8102) protein is Large ribosomal subunit protein uL16.